The primary structure comprises 149 residues: SsrA-binding protein (149 aa).

This sequence belongs to the SmpB family.

Its subcellular location is the cytoplasm. Its function is as follows. Required for rescue of stalled ribosomes mediated by trans-translation. Binds to transfer-messenger RNA (tmRNA), required for stable association of tmRNA with ribosomes. tmRNA and SmpB together mimic tRNA shape, replacing the anticodon stem-loop with SmpB. tmRNA is encoded by the ssrA gene; the 2 termini fold to resemble tRNA(Ala) and it encodes a 'tag peptide', a short internal open reading frame. During trans-translation Ala-aminoacylated tmRNA acts like a tRNA, entering the A-site of stalled ribosomes, displacing the stalled mRNA. The ribosome then switches to translate the ORF on the tmRNA; the nascent peptide is terminated with the 'tag peptide' encoded by the tmRNA and targeted for degradation. The ribosome is freed to recommence translation, which seems to be the essential function of trans-translation. The sequence is that of SsrA-binding protein from Wolbachia pipientis subsp. Culex pipiens (strain wPip).